A 295-amino-acid chain; its full sequence is Probable adenylate kinase 6, chloroplastic (295 aa).

Residues methionine 1–alanine 46 constitute a chloroplast transit peptide. Glycine 74 to threonine 79 is a binding site for ATP. Residues alanine 94–valine 123 form an NMP region. AMP-binding positions include threonine 95, arginine 100, lysine 121–valine 123, glycine 151–arginine 154, and glutamine 158. Positions glycine 187 to aspartate 235 are LID. Arginine 188 provides a ligand contact to ATP. Arginine 243 is a binding site for AMP. Glycine 271 contacts ATP.

It belongs to the adenylate kinase family. As to quaternary structure, monomer.

Its subcellular location is the plastid. It localises to the chloroplast. The catalysed reaction is AMP + ATP = 2 ADP. In terms of biological role, catalyzes the reversible transfer of the terminal phosphate group between ATP and AMP. Plays an important role in cellular energy homeostasis and in adenine nucleotide metabolism. In Arabidopsis thaliana (Mouse-ear cress), this protein is Probable adenylate kinase 6, chloroplastic.